The chain runs to 319 residues: Acetyl-coenzyme A carboxylase carboxyl transferase subunit alpha (319 aa).

One can recognise a CoA carboxyltransferase C-terminal domain in the interval 35-296; it reads NIDEEVHRLR…KAQLLTDLAD (262 aa).

The protein belongs to the AccA family. Acetyl-CoA carboxylase is a heterohexamer composed of biotin carboxyl carrier protein (AccB), biotin carboxylase (AccC) and two subunits each of ACCase subunit alpha (AccA) and ACCase subunit beta (AccD).

The protein resides in the cytoplasm. It catalyses the reaction N(6)-carboxybiotinyl-L-lysyl-[protein] + acetyl-CoA = N(6)-biotinyl-L-lysyl-[protein] + malonyl-CoA. The protein operates within lipid metabolism; malonyl-CoA biosynthesis; malonyl-CoA from acetyl-CoA: step 1/1. In terms of biological role, component of the acetyl coenzyme A carboxylase (ACC) complex. First, biotin carboxylase catalyzes the carboxylation of biotin on its carrier protein (BCCP) and then the CO(2) group is transferred by the carboxyltransferase to acetyl-CoA to form malonyl-CoA. This is Acetyl-coenzyme A carboxylase carboxyl transferase subunit alpha from Escherichia coli O45:K1 (strain S88 / ExPEC).